Reading from the N-terminus, the 515-residue chain is 2,3-bisphosphoglycerate-independent phosphoglycerate mutase (515 aa).

Residues Asp14 and Ser64 each contribute to the Mn(2+) site. The active-site Phosphoserine intermediate is Ser64. Residues His125, Arg155–Asp156, Arg187, Arg193, Arg263–Arg266, and Lys337 each bind substrate. Asp404, His408, Asp445, His446, and His464 together coordinate Mn(2+).

It belongs to the BPG-independent phosphoglycerate mutase family. In terms of assembly, monomer. The cofactor is Mn(2+).

It carries out the reaction (2R)-2-phosphoglycerate = (2R)-3-phosphoglycerate. It functions in the pathway carbohydrate degradation; glycolysis; pyruvate from D-glyceraldehyde 3-phosphate: step 3/5. Its function is as follows. Catalyzes the interconversion of 2-phosphoglycerate and 3-phosphoglycerate. This Yersinia pestis bv. Antiqua (strain Antiqua) protein is 2,3-bisphosphoglycerate-independent phosphoglycerate mutase.